Consider the following 267-residue polypeptide: 2-keto-3-deoxy-L-rhamnonate aldolase (267 aa).

The Proton acceptor role is filled by His49. Gln151 contributes to the substrate binding site. Glu153 contributes to the Mg(2+) binding site. Substrate-binding residues include Ala178 and Asp179. Position 179 (Asp179) interacts with Mg(2+).

This sequence belongs to the HpcH/HpaI aldolase family. KDR aldolase subfamily. Homohexamer. Mg(2+) serves as cofactor.

The enzyme catalyses 2-dehydro-3-deoxy-L-rhamnonate = (S)-lactaldehyde + pyruvate. In terms of biological role, catalyzes the reversible retro-aldol cleavage of 2-keto-3-deoxy-L-rhamnonate (KDR) to pyruvate and lactaldehyde. The protein is 2-keto-3-deoxy-L-rhamnonate aldolase of Shigella dysenteriae serotype 1 (strain Sd197).